The primary structure comprises 763 residues: 5-methyltetrahydropteroyltriglutamate--homocysteine methyltransferase (763 aa).

5-methyltetrahydropteroyltri-L-glutamate-binding positions include 16 to 19 (RELK) and Lys-117. L-homocysteine contacts are provided by residues 438–440 (IGS) and Glu-491. L-methionine-binding positions include 438–440 (IGS) and Glu-491. 5-methyltetrahydropteroyltri-L-glutamate contacts are provided by residues 522–523 (RC) and Trp-568. Asp-606 serves as a coordination point for L-homocysteine. Asp-606 contacts L-methionine. Glu-612 serves as a coordination point for 5-methyltetrahydropteroyltri-L-glutamate. Zn(2+)-binding residues include His-648, Cys-650, and Glu-672. His-701 serves as the catalytic Proton donor. Cys-733 is a binding site for Zn(2+).

The protein belongs to the vitamin-B12 independent methionine synthase family. Requires Zn(2+) as cofactor.

The enzyme catalyses 5-methyltetrahydropteroyltri-L-glutamate + L-homocysteine = tetrahydropteroyltri-L-glutamate + L-methionine. It functions in the pathway amino-acid biosynthesis; L-methionine biosynthesis via de novo pathway; L-methionine from L-homocysteine (MetE route): step 1/1. Catalyzes the transfer of a methyl group from 5-methyltetrahydrofolate to homocysteine resulting in methionine formation. The polypeptide is 5-methyltetrahydropteroyltriglutamate--homocysteine methyltransferase (Pseudomonas paraeruginosa (strain DSM 24068 / PA7) (Pseudomonas aeruginosa (strain PA7))).